The sequence spans 451 residues: Tubulin alpha-2 chain (451 aa).

Gln11 is a GTP binding site. N6-acetyllysine is present on Lys40. GTP is bound by residues Glu71, Ser140, Gly144, Thr145, Thr179, Asn206, and Asn228. Glu71 serves as a coordination point for Mg(2+). The active site involves Glu254. Positions 432–451 (YEEVGIDTADGEDDEEANDY) are disordered.

This sequence belongs to the tubulin family. As to quaternary structure, dimer of alpha and beta chains. A typical microtubule is a hollow water-filled tube with an outer diameter of 25 nm and an inner diameter of 15 nM. Alpha-beta heterodimers associate head-to-tail to form protofilaments running lengthwise along the microtubule wall with the beta-tubulin subunit facing the microtubule plus end conferring a structural polarity. Microtubules usually have 13 protofilaments but different protofilament numbers can be found in some organisms and specialized cells. It depends on Mg(2+) as a cofactor. Undergoes a tyrosination/detyrosination cycle, the cyclic removal and re-addition of a C-terminal tyrosine residue by the enzymes tubulin tyrosine carboxypeptidase (TTCP) and tubulin tyrosine ligase (TTL), respectively. Post-translationally, acetylation of alpha chains at Lys-40 stabilizes microtubules and affects affinity and processivity of microtubule motors. This modification has a role in multiple cellular functions, ranging from cell motility, cell cycle progression or cell differentiation to intracellular trafficking and signaling.

It is found in the cytoplasm. The protein localises to the cytoskeleton. The catalysed reaction is GTP + H2O = GDP + phosphate + H(+). Functionally, tubulin is the major constituent of microtubules, a cylinder consisting of laterally associated linear protofilaments composed of alpha- and beta-tubulin heterodimers. Microtubules grow by the addition of GTP-tubulin dimers to the microtubule end, where a stabilizing cap forms. Below the cap, tubulin dimers are in GDP-bound state, owing to GTPase activity of alpha-tubulin. The sequence is that of Tubulin alpha-2 chain from Homarus americanus (American lobster).